The chain runs to 204 residues: Holliday junction branch migration complex subunit RuvA (204 aa).

The interval Met1–Leu64 is domain I. Positions Asp65–Ala143 are domain II. The flexible linker stretch occupies residues Gly144 to Ser151. The tract at residues Ser151 to Leu204 is domain III.

This sequence belongs to the RuvA family. Homotetramer. Forms an RuvA(8)-RuvB(12)-Holliday junction (HJ) complex. HJ DNA is sandwiched between 2 RuvA tetramers; dsDNA enters through RuvA and exits via RuvB. An RuvB hexamer assembles on each DNA strand where it exits the tetramer. Each RuvB hexamer is contacted by two RuvA subunits (via domain III) on 2 adjacent RuvB subunits; this complex drives branch migration. In the full resolvosome a probable DNA-RuvA(4)-RuvB(12)-RuvC(2) complex forms which resolves the HJ.

It localises to the cytoplasm. Its function is as follows. The RuvA-RuvB-RuvC complex processes Holliday junction (HJ) DNA during genetic recombination and DNA repair, while the RuvA-RuvB complex plays an important role in the rescue of blocked DNA replication forks via replication fork reversal (RFR). RuvA specifically binds to HJ cruciform DNA, conferring on it an open structure. The RuvB hexamer acts as an ATP-dependent pump, pulling dsDNA into and through the RuvAB complex. HJ branch migration allows RuvC to scan DNA until it finds its consensus sequence, where it cleaves and resolves the cruciform DNA. The chain is Holliday junction branch migration complex subunit RuvA from Chlorobaculum parvum (strain DSM 263 / NCIMB 8327) (Chlorobium vibrioforme subsp. thiosulfatophilum).